Here is a 228-residue protein sequence, read N- to C-terminus: PKHD-type hydroxylase Rmet_3078 (228 aa).

In terms of domain architecture, Fe2OG dioxygenase spans Ile80–Ser180. Residues His98, Asp100, and His161 each coordinate Fe cation. Arg171 is a binding site for 2-oxoglutarate.

Fe(2+) is required as a cofactor. It depends on L-ascorbate as a cofactor.

In Cupriavidus metallidurans (strain ATCC 43123 / DSM 2839 / NBRC 102507 / CH34) (Ralstonia metallidurans), this protein is PKHD-type hydroxylase Rmet_3078.